Here is a 361-residue protein sequence, read N- to C-terminus: Epi-isozizaene synthase (361 aa).

The Mg(2+) site is built by Asp99, Asp103, Asn240, Ser244, and Glu248. The DDXXD motif motif lies at 99 to 103; sequence DDRHD.

Belongs to the terpene synthase family. It depends on Mg(2+) as a cofactor. Mn(2+) serves as cofactor. The cofactor is Fe(3+).

The enzyme catalyses (2E,6E)-farnesyl diphosphate = (+)-epi-isozizaene + diphosphate. Its pathway is sesquiterpene biosynthesis; epi-isozizaene biosynthesis. Its function is as follows. Catalyzes the cyclization of farnesyl diphosphate (FPP) to the sesquiterpene epi-isozizaene. This chain is Epi-isozizaene synthase (cyc1), found in Streptomyces coelicolor (strain ATCC BAA-471 / A3(2) / M145).